A 500-amino-acid polypeptide reads, in one-letter code: Aspartyl/glutamyl-tRNA(Asn/Gln) amidotransferase subunit B (500 aa).

Belongs to the GatB/GatE family. GatB subfamily. In terms of assembly, heterotrimer of A, B and C subunits.

It carries out the reaction L-glutamyl-tRNA(Gln) + L-glutamine + ATP + H2O = L-glutaminyl-tRNA(Gln) + L-glutamate + ADP + phosphate + H(+). The enzyme catalyses L-aspartyl-tRNA(Asn) + L-glutamine + ATP + H2O = L-asparaginyl-tRNA(Asn) + L-glutamate + ADP + phosphate + 2 H(+). Allows the formation of correctly charged Asn-tRNA(Asn) or Gln-tRNA(Gln) through the transamidation of misacylated Asp-tRNA(Asn) or Glu-tRNA(Gln) in organisms which lack either or both of asparaginyl-tRNA or glutaminyl-tRNA synthetases. The reaction takes place in the presence of glutamine and ATP through an activated phospho-Asp-tRNA(Asn) or phospho-Glu-tRNA(Gln). The sequence is that of Aspartyl/glutamyl-tRNA(Asn/Gln) amidotransferase subunit B from Sinorhizobium medicae (strain WSM419) (Ensifer medicae).